A 171-amino-acid chain; its full sequence is Inosine/xanthosine triphosphatase (171 aa).

8–13 (TTNPAK) contacts substrate. Mg(2+)-binding residues include Glu38 and Gln68.

It belongs to the YjjX NTPase family. As to quaternary structure, homodimer. Requires Mg(2+) as cofactor. The cofactor is Mn(2+).

It catalyses the reaction XTP + H2O = XDP + phosphate + H(+). The enzyme catalyses ITP + H2O = IDP + phosphate + H(+). Its function is as follows. Phosphatase that hydrolyzes non-canonical purine nucleotides such as XTP and ITP to their respective diphosphate derivatives. Probably excludes non-canonical purines from DNA/RNA precursor pool, thus preventing their incorporation into DNA/RNA and avoiding chromosomal lesions. The polypeptide is Inosine/xanthosine triphosphatase (yjjX) (Salmonella typhimurium (strain LT2 / SGSC1412 / ATCC 700720)).